A 571-amino-acid polypeptide reads, in one-letter code: uncharacterized protein (571 aa).

Residues 1 to 3 (MNS) lie on the Cytoplasmic side of the membrane. A helical transmembrane segment spans residues 4–24 (LQILSFVGFTLLVAVITWWKV). The Periplasmic portion of the chain corresponds to 25–74 (RKTDTGSQQGYFLAGRSLKAPVIAASLMLTNLSTEQLVGLSGQAYKSGMS). The chain crosses the membrane as a helical span at residues 75–95 (VMGWEVTSAVTLIFLALIFLP). The Cytoplasmic portion of the chain corresponds to 96–118 (RYLKRGIATIPDFLEERYDKTTR). Residues 119–139 (IIIDFCFLIATGVCFLPIVLY) form a helical membrane-spanning segment. Residues 140-162 (SGALALNSLFHVGESLQISHGAA) are Periplasmic-facing. The chain crosses the membrane as a helical span at residues 163 to 183 (IWLLVILLGLAGILYAVIGGL). Topologically, residues 184–191 (RAMAVADS) are cytoplasmic. The chain crosses the membrane as a helical span at residues 192 to 212 (INGIGLVIGGLMVPVFGLIAM). Residues 213 to 240 (GKGSFMQGIEQLTTVHAEKLNSIGGPTD) lie on the Periplasmic side of the membrane. Residues 241–261 (PLPIGAAFTGLILVNTFYWCT) traverse the membrane as a helical segment. Residues 262–283 (NQGIVQRTLASKSLAEGQKGAL) lie on the Cytoplasmic side of the membrane. The chain crosses the membrane as a helical span at residues 284–304 (LTAVLKMLDPLVLVLPGLIAF). The Periplasmic segment spans residues 305-324 (HLYQDLPKADMAYPTLVNNV). The helical transmembrane segment at 325 to 345 (LPVPMVGFFGAVLFGAVISTF) threads the bilayer. Residues 346 to 380 (NGFLNSASTLFSMGIYRRIINQNAEPQQLVTVGRK) lie on the Cytoplasmic side of the membrane. The chain crosses the membrane as a helical span at residues 381–401 (FGFFIAIVSVLVAPWIANAPQ). Residues 402-415 (GLYSWMKQLNGIYN) lie on the Periplasmic side of the membrane. The chain crosses the membrane as a helical span at residues 416 to 436 (VPLVTIIIMGFFFPRIPALAA). Position 437 (Lys437) is a topological domain, cytoplasmic. A helical transmembrane segment spans residues 438-458 (VAMGIGIISYITINYLVKFDF). Residues 459-460 (HF) lie on the Periplasmic side of the membrane. The helical transmembrane segment at 461-481 (LYVLACTFCINVVVMLVIGFI) threads the bilayer. The Cytoplasmic portion of the chain corresponds to 482–505 (KPRATPFTFKDAFAVDMKPWKNVK). Residues 506-526 (IASIGILFAMIGVYAGLAEFG) form a helical membrane-spanning segment. At 527 to 532 (GYGTRW) the chain is on the periplasmic side. The chain crosses the membrane as a helical span at residues 533–553 (LAMISYFIAAVVIVYLIFDSW). Over 554–571 (RHRHDPAVTFTPDGKDSL) the chain is Cytoplasmic.

This sequence belongs to the sodium:solute symporter (SSF) (TC 2.A.21) family.

It localises to the cell inner membrane. This is an uncharacterized protein from Escherichia coli (strain K12).